Here is a 781-residue protein sequence, read N- to C-terminus: Putative UPF0313 protein YPO0674/y3502/YP_2990 (781 aa).

The 279-residue stretch at 368 to 646 (AYDMIRFSIN…KALLRYHDPA (279 aa)) folds into the Radical SAM core domain. [4Fe-4S] cluster is bound by residues cysteine 382, cysteine 386, and cysteine 389. The disordered stretch occupies residues 681-781 (REARRALRHH…AGSRGKNRQH (101 aa)). Over residues 696-708 (KHTSITRQRQPSN) the composition is skewed to polar residues. The segment covering 726–750 (TSSAHSTSANQSTSANQSTSAAHST) has biased composition (low complexity).

This sequence belongs to the UPF0313 family. [4Fe-4S] cluster serves as cofactor.

In Yersinia pestis, this protein is Putative UPF0313 protein YPO0674/y3502/YP_2990.